The primary structure comprises 496 residues: DNA-dependent metalloprotease SPRTN (496 aa).

The residue at position 1 (M1) is an N-acetylmethionine. Residues 45 to 212 (LQALFLQFND…KTCGGTYIKI (168 aa)) enclose the SprT-like domain. Residue H111 participates in Zn(2+) binding. E112 is a catalytic residue. H115 and H130 together coordinate Zn(2+). Residue K230 is modified to N6-acetyllysine. The SHP-box motif lies at 253–261 (FSGKGYVLG). S268 bears the Phosphoserine mark. Residue K303 forms a Glycyl lysine isopeptide (Lys-Gly) (interchain with G-Cter in SUMO2) linkage. Positions 326-333 (QSVLSSYF) match the PIP-box motif. K342 participates in a covalent cross-link: Glycyl lysine isopeptide (Lys-Gly) (interchain with G-Cter in SUMO2); alternate. Residue K342 forms a Glycyl lysine isopeptide (Lys-Gly) (interchain with G-Cter in ubiquitin); alternate linkage. The tract at residues 346–459 (NVNGSPVKSG…STPRSSGGQR (114 aa)) is disordered. A Glycyl lysine isopeptide (Lys-Gly) (interchain with G-Cter in SUMO2) cross-link involves residue K361. Residues 382-403 (SSKVTAPASATVTSAAGTSAAI) show a composition bias toward low complexity. A Phosphoserine modification is found at S383. Positions 412–423 (DQFLNKRPRLED) match the Nuclear localization signal motif. Composition is skewed to polar residues over residues 426-437 (ALNNIKEQTQSG) and 445-457 (RPTAISTPRSSGG). K431 participates in a covalent cross-link: Glycyl lysine isopeptide (Lys-Gly) (interchain with G-Cter in SUMO2). Residues 461–488 (LVNCPVCQGVVLESQINEHLDRCLEGSK) form a UBZ4-type zinc finger. The Zn(2+) site is built by C464, C467, H479, and C483.

Belongs to the Spartan family. In terms of assembly, homodimer. Interacts (VIA PIP-box) with PCNA (when ubiquitinated). Interacts (via its SHP-box) with VCP/p97. Interacts with RAD18. Interacts with KCTD13 and POLD3. Zn(2+) is required as a cofactor. Autocatalytically cleaved in response to double-stranded DNA-binding: autocatalytic cleavage takes place in trans and leads to inactivation. In terms of processing, monoubiquitinated; monoubiquitination promotes exclusion from chromatin. Deubiquitinated by VCPIP1: deubiquitination is required for subsequent acetylation and recruitment to chromatin and DNA damage sites. Post-translationally, acetylated following deubiquitination by VCPIP1, leading to recruitment to chromatin and DNA damage sites. Phosphorylation by CHEK1 promotes recruitment to chromatin.

It localises to the nucleus. The protein resides in the chromosome. DNA-binding activates the protease activity: single-stranded DNA-binding specifically activates ability to cleave covalent DNA-protein cross-links (DPCs). In contrast, double-stranded DNA-binding specifically activates autocatalytic cleavage, and subsequent inactivation. Its function is as follows. DNA-dependent metalloendopeptidase that mediates the proteolytic cleavage of covalent DNA-protein cross-links (DPCs) during DNA synthesis, thereby playing a key role in maintaining genomic integrity. DPCs are highly toxic DNA lesions that interfere with essential chromatin transactions, such as replication and transcription, and which are induced by reactive agents, such as UV light or formaldehyde. Associates with the DNA replication machinery and specifically removes DPCs during DNA synthesis. Catalyzes proteolytic cleavage of the HMCES DNA-protein cross-link following unfolding by the BRIP1/FANCJ helicase. Acts as a pleiotropic protease for DNA-binding proteins cross-linked with DNA, such as TOP1, TOP2A, histones H3 and H4. Mediates degradation of DPCs that are not ubiquitinated, while it is not able to degrade ubiquitinated DPCs. SPRTN activation requires polymerase collision with DPCs followed by helicase bypass of DPCs. Involved in recruitment of VCP/p97 to sites of DNA damage. Also acts as an activator of CHEK1 during normal DNA replication by mediating proteolytic cleavage of CHEK1, thereby promoting CHEK1 removal from chromatin and subsequent activation. Does not activate CHEK1 in response to DNA damage. May also act as a 'reader' of ubiquitinated PCNA: recruited to sites of UV damage and interacts with ubiquitinated PCNA and RAD18, the E3 ubiquitin ligase that monoubiquitinates PCNA. Facilitates chromatin association of RAD18 and is required for efficient PCNA monoubiquitination, promoting a feed-forward loop to enhance PCNA ubiquitination and translesion DNA synthesis. This is DNA-dependent metalloprotease SPRTN from Rattus norvegicus (Rat).